The following is a 431-amino-acid chain: Histidinol dehydrogenase (431 aa).

Residues Tyr-127, Gln-189, and Asn-212 each coordinate NAD(+). Residues Ser-237, Gln-259, and His-262 each coordinate substrate. The Zn(2+) site is built by Gln-259 and His-262. Residues Glu-326 and His-327 each act as proton acceptor in the active site. His-327, Asp-360, Glu-414, and His-419 together coordinate substrate. Asp-360 lines the Zn(2+) pocket. Residue His-419 coordinates Zn(2+).

Belongs to the histidinol dehydrogenase family. Requires Zn(2+) as cofactor.

The enzyme catalyses L-histidinol + 2 NAD(+) + H2O = L-histidine + 2 NADH + 3 H(+). It functions in the pathway amino-acid biosynthesis; L-histidine biosynthesis; L-histidine from 5-phospho-alpha-D-ribose 1-diphosphate: step 9/9. Catalyzes the sequential NAD-dependent oxidations of L-histidinol to L-histidinaldehyde and then to L-histidine. In Xylella fastidiosa (strain Temecula1 / ATCC 700964), this protein is Histidinol dehydrogenase.